The primary structure comprises 432 residues: Glutamate-1-semialdehyde 2,1-aminomutase (432 aa).

Lys-272 carries the post-translational modification N6-(pyridoxal phosphate)lysine.

This sequence belongs to the class-III pyridoxal-phosphate-dependent aminotransferase family. HemL subfamily. As to quaternary structure, homodimer. Pyridoxal 5'-phosphate serves as cofactor.

The protein localises to the cytoplasm. It carries out the reaction (S)-4-amino-5-oxopentanoate = 5-aminolevulinate. It participates in porphyrin-containing compound metabolism; protoporphyrin-IX biosynthesis; 5-aminolevulinate from L-glutamyl-tRNA(Glu): step 2/2. It functions in the pathway porphyrin-containing compound metabolism; chlorophyll biosynthesis. The sequence is that of Glutamate-1-semialdehyde 2,1-aminomutase from Nostoc punctiforme (strain ATCC 29133 / PCC 73102).